The chain runs to 210 residues: Oxygen-insensitive NADPH nitroreductase (210 aa).

150-155 provides a ligand contact to NADP(+); that stretch reads GVSLMG.

This sequence belongs to the nitroreductase family.

Reduction of a variety of nitroaromatic compounds using NADPH as source of reducing equivalents; two electrons are transferred. Capable of reducing metronidazole; inactive RdxA renders the bacterium resistant to this compound. The reduction of metronidazole generates hydroxylamine, a potent mutagen and bactericide. The protein is Oxygen-insensitive NADPH nitroreductase (rdxA) of Helicobacter pylori (strain ATCC 700392 / 26695) (Campylobacter pylori).